The sequence spans 713 residues: Phosphoribosylformylglycinamidine synthase subunit PurL (713 aa).

Histidine 32 is an active-site residue. Residue tyrosine 35 coordinates ATP. Glutamate 76 provides a ligand contact to Mg(2+). Substrate-binding positions include 77-80 (SHNH) and arginine 99. Catalysis depends on histidine 78, which acts as the Proton acceptor. Mg(2+) is bound at residue aspartate 100. Glutamine 224 contacts substrate. Position 252 (aspartate 252) interacts with Mg(2+). 296-298 (ESQ) lines the substrate pocket. 2 residues coordinate ATP: aspartate 471 and glycine 508. Asparagine 509 serves as a coordination point for Mg(2+). Residue serine 511 participates in substrate binding.

It belongs to the FGAMS family. Monomer. Part of the FGAM synthase complex composed of 1 PurL, 1 PurQ and 2 PurS subunits.

It localises to the cytoplasm. The catalysed reaction is N(2)-formyl-N(1)-(5-phospho-beta-D-ribosyl)glycinamide + L-glutamine + ATP + H2O = 2-formamido-N(1)-(5-O-phospho-beta-D-ribosyl)acetamidine + L-glutamate + ADP + phosphate + H(+). Its pathway is purine metabolism; IMP biosynthesis via de novo pathway; 5-amino-1-(5-phospho-D-ribosyl)imidazole from N(2)-formyl-N(1)-(5-phospho-D-ribosyl)glycinamide: step 1/2. Functionally, part of the phosphoribosylformylglycinamidine synthase complex involved in the purines biosynthetic pathway. Catalyzes the ATP-dependent conversion of formylglycinamide ribonucleotide (FGAR) and glutamine to yield formylglycinamidine ribonucleotide (FGAM) and glutamate. The FGAM synthase complex is composed of three subunits. PurQ produces an ammonia molecule by converting glutamine to glutamate. PurL transfers the ammonia molecule to FGAR to form FGAM in an ATP-dependent manner. PurS interacts with PurQ and PurL and is thought to assist in the transfer of the ammonia molecule from PurQ to PurL. This chain is Phosphoribosylformylglycinamidine synthase subunit PurL, found in Thermococcus kodakarensis (strain ATCC BAA-918 / JCM 12380 / KOD1) (Pyrococcus kodakaraensis (strain KOD1)).